A 369-amino-acid polypeptide reads, in one-letter code: Biglycan (369 aa).

The signal sequence occupies residues 1–16; sequence MRPLWLLTLLLALSQA. The propeptide occupies 17–37; that stretch reads LPFEQKGFWDFTLDDGLLMMN. 2 O-linked (Xyl...) (glycosaminoglycan) serine glycosylation sites follow: serine 42 and serine 48. Cystine bridges form between cysteine 64–cysteine 70 and cysteine 68–cysteine 77. LRR repeat units follow at residues 83–103, 104–127, 128–151, 152–172, 173–196, 197–221, 222–242, 243–266, 267–290, 291–313, 314–343, and 344–369; these read KTVP…NNDI, SELR…NNKI, SKIH…KNHL, VEIP…DNRI, RKVP…GNPL, ENSG…EAKL, TGIP…HNKI, QAIE…HNQI, RMIE…NNKL, SRVP…SNNI, TKVG…NNPV, and PYWE…NYKK. Residues asparagine 271 and asparagine 312 are each glycosylated (N-linked (GlcNAc...) asparagine). Cysteines 322 and 355 form a disulfide.

It belongs to the small leucine-rich proteoglycan (SLRP) family. SLRP class I subfamily. As to quaternary structure, homodimer. Forms a ternary complex with MFAP2 and ELN. Post-translationally, the two attached glycosaminoglycan chains can be either chondroitin sulfate or dermatan sulfate. In terms of tissue distribution, found in several connective tissues, especially in articular cartilages.

It is found in the secreted. It localises to the extracellular space. The protein resides in the extracellular matrix. Functionally, may be involved in collagen fiber assembly. In Rattus norvegicus (Rat), this protein is Biglycan (Bgn).